Consider the following 252-residue polypeptide: NAD-dependent protein deacetylase (252 aa).

In terms of domain architecture, Deacetylase sirtuin-type spans 2–243 (DSKRDEKILE…DRVVKELKKI (242 aa)). 8 residues coordinate NAD(+): A28, T32, F39, R40, Q109, I111, D112, and H127. F39 provides a ligand contact to nicotinamide. Nicotinamide contacts are provided by I111 and D112. H127 serves as the catalytic Proton acceptor. Zn(2+) is bound by residues C135, C138, C148, and C150. The NAD(+) site is built by T188, S189, and N211.

This sequence belongs to the sirtuin family. Class U subfamily. Zn(2+) serves as cofactor.

It is found in the cytoplasm. It carries out the reaction N(6)-acetyl-L-lysyl-[protein] + NAD(+) + H2O = 2''-O-acetyl-ADP-D-ribose + nicotinamide + L-lysyl-[protein]. Functionally, NAD-dependent protein deacetylase which modulates the activities of several enzymes which are inactive in their acetylated form. In Fusobacterium nucleatum subsp. nucleatum (strain ATCC 25586 / DSM 15643 / BCRC 10681 / CIP 101130 / JCM 8532 / KCTC 2640 / LMG 13131 / VPI 4355), this protein is NAD-dependent protein deacetylase.